Reading from the N-terminus, the 68-residue chain is Large ribosomal subunit protein bL33c (68 aa).

The protein belongs to the bacterial ribosomal protein bL33 family.

The protein resides in the plastid. The protein localises to the chloroplast. This is Large ribosomal subunit protein bL33c from Nymphaea alba (White water-lily).